The chain runs to 69 residues: Neurotoxin Cex3 (69 aa).

A signal peptide is located at residue alanine 1. One can recognise an LCN-type CS-alpha/beta domain in the interval 2–67 (KDGYLVNKST…TYPLPNKSCG (66 aa)). 4 cysteine pairs are disulfide-bonded: cysteine 13–cysteine 66, cysteine 17–cysteine 42, cysteine 26–cysteine 47, and cysteine 30–cysteine 49. Cysteine 66 bears the Cysteine amide mark. Positions 67–69 (GRK) are excised as a propeptide.

The protein belongs to the long (4 C-C) scorpion toxin superfamily. Sodium channel inhibitor family. Beta subfamily. As to expression, expressed by the venom gland.

It is found in the secreted. Its function is as follows. Beta toxins bind voltage-independently at site-4 of sodium channels (Nav) and shift the voltage of activation toward more negative potentials thereby affecting sodium channel activation and promoting spontaneous and repetitive firing. This Centruroides exilicauda (Bark scorpion) protein is Neurotoxin Cex3.